Here is a 362-residue protein sequence, read N- to C-terminus: MTTPLTFDNIRRAPKALLHDHLDGGLRPSTVLELAEQYGYEDLPAHDADGLATFFRTAAHSGSLVRYLEPFAHTVGVMQNPDALHRVARECVEDLAADNVVYAEVRFAPELHIDGGLSLDAVVDAVLAGFADGEKAAAADGRAITVRCLVTAMRHAARSREIAELAIRFRDKGVVGFDIAGAEAGYPPSRHLDAFEYMRSNNARFTIHAGEAFGLPSIHEAIAFCGADRLGHGVRIVDDIEIDADGNAKLGRLASLLRDKRIPFEMCPSSNVQTGAVASIAEHPFDRLARLRFRVTVNTDNRLMSDTSMSMEMLRLVEAFGYGWSDLERFTINAMKSAFIAFDERLAIIDEVIKPRYAVLVG.

Zn(2+) contacts are provided by H19 and H21. Positions 21, 23, and 181 each coordinate substrate. H208 contacts Zn(2+). The active-site Proton donor is E211. D300 contacts Zn(2+).

It belongs to the metallo-dependent hydrolases superfamily. Adenosine and AMP deaminases family. Adenosine deaminase subfamily. Zn(2+) is required as a cofactor.

It catalyses the reaction adenosine + H2O + H(+) = inosine + NH4(+). It carries out the reaction 2'-deoxyadenosine + H2O + H(+) = 2'-deoxyinosine + NH4(+). Catalyzes the hydrolytic deamination of adenosine and 2-deoxyadenosine. This is Adenosine deaminase from Mycolicibacterium vanbaalenii (strain DSM 7251 / JCM 13017 / BCRC 16820 / KCTC 9966 / NRRL B-24157 / PYR-1) (Mycobacterium vanbaalenii).